The sequence spans 134 residues: uncharacterized protein (134 aa).

The tract at residues 59–92 (VSKPKRRSPHPHGNKAADKRKTTEKEPERKKRVG) is disordered. Basic residues predominate over residues 61–71 (KPKRRSPHPHG). The span at 73 to 87 (KAADKRKTTEKEPER) shows a compositional bias: basic and acidic residues.

This is an uncharacterized protein from Saccharomyces cerevisiae (strain ATCC 204508 / S288c) (Baker's yeast).